The primary structure comprises 25 residues: Glucomannokinase (25 aa).

Belongs to the ROK (NagC/XylR) family. Homodimer.

The catalysed reaction is D-glucose + ATP = D-glucose 6-phosphate + ADP + H(+). The enzyme catalyses D-mannose + ATP = D-mannose 6-phosphate + ADP + H(+). It functions in the pathway carbohydrate degradation; glycolysis; D-glyceraldehyde 3-phosphate and glycerone phosphate from D-glucose: step 1/4. It participates in carbohydrate metabolism; mannose metabolism. Competitively inhibited by 2-deoxy-glucose. Its function is as follows. The enzyme has great affinity for glucose and mannose. In Segatella bryantii (Prevotella bryantii), this protein is Glucomannokinase.